Reading from the N-terminus, the 410-residue chain is Arginine deiminase (410 aa).

Residue Cys-399 is the Amidino-cysteine intermediate of the active site.

Belongs to the arginine deiminase family.

It is found in the cytoplasm. The enzyme catalyses L-arginine + H2O = L-citrulline + NH4(+). It participates in amino-acid degradation; L-arginine degradation via ADI pathway; carbamoyl phosphate from L-arginine: step 1/2. The protein is Arginine deiminase of Listeria monocytogenes serovar 1/2a (strain ATCC BAA-679 / EGD-e).